Reading from the N-terminus, the 192-residue chain is Ion-translocating oxidoreductase complex subunit B (192 aa).

The hydrophobic stretch occupies residues 1-26 (MNAFWIAVAAVSLLGLAFGAILGYAS). One can recognise a 4Fe-4S domain in the interval 32-91 (EDDPVVEKIDEILPQSQCGQCGYPGCRPYAEAISCNGEKINRCAPGGEAVMLKIAELLNV). [4Fe-4S] cluster is bound by residues Cys49, Cys52, Cys57, Cys74, Cys117, Cys120, Cys123, Cys127, Cys147, Cys150, Cys153, and Cys157. 2 consecutive 4Fe-4S ferredoxin-type domains span residues 108 to 137 (MVAV…GATR) and 138 to 167 (AMHT…LQPV).

This sequence belongs to the 4Fe4S bacterial-type ferredoxin family. RnfB subfamily. As to quaternary structure, the complex is composed of six subunits: RsxA, RsxB, RsxC, RsxD, RsxE and RsxG. [4Fe-4S] cluster is required as a cofactor.

The protein localises to the cell inner membrane. In terms of biological role, part of a membrane-bound complex that couples electron transfer with translocation of ions across the membrane. Required to maintain the reduced state of SoxR. In Escherichia coli O6:H1 (strain CFT073 / ATCC 700928 / UPEC), this protein is Ion-translocating oxidoreductase complex subunit B.